The sequence spans 298 residues: Acetylglutamate kinase (298 aa).

Substrate contacts are provided by residues 64 to 65 (GG), Arg86, and Asn195.

Belongs to the acetylglutamate kinase family. ArgB subfamily.

The protein localises to the cytoplasm. It carries out the reaction N-acetyl-L-glutamate + ATP = N-acetyl-L-glutamyl 5-phosphate + ADP. Its pathway is amino-acid biosynthesis; L-arginine biosynthesis; N(2)-acetyl-L-ornithine from L-glutamate: step 2/4. Its function is as follows. Catalyzes the ATP-dependent phosphorylation of N-acetyl-L-glutamate. The chain is Acetylglutamate kinase from Aquifex aeolicus (strain VF5).